Here is a 145-residue protein sequence, read N- to C-terminus: Flagellar assembly factor FliW (145 aa).

It belongs to the FliW family. In terms of assembly, interacts with translational regulator CsrA and flagellin(s).

The protein localises to the cytoplasm. Acts as an anti-CsrA protein, binds CsrA and prevents it from repressing translation of its target genes, one of which is flagellin. Binds to flagellin and participates in the assembly of the flagellum. In Clostridium tetani (strain Massachusetts / E88), this protein is Flagellar assembly factor FliW.